A 90-amino-acid chain; its full sequence is Co-chaperonin GroES (90 aa).

The protein belongs to the GroES chaperonin family. Heptamer of 7 subunits arranged in a ring. Interacts with the chaperonin GroEL.

Its subcellular location is the cytoplasm. In terms of biological role, together with the chaperonin GroEL, plays an essential role in assisting protein folding. The GroEL-GroES system forms a nano-cage that allows encapsulation of the non-native substrate proteins and provides a physical environment optimized to promote and accelerate protein folding. GroES binds to the apical surface of the GroEL ring, thereby capping the opening of the GroEL channel. The polypeptide is Co-chaperonin GroES (Fusobacterium nucleatum subsp. nucleatum (strain ATCC 25586 / DSM 15643 / BCRC 10681 / CIP 101130 / JCM 8532 / KCTC 2640 / LMG 13131 / VPI 4355)).